The sequence spans 254 residues: MIALLSPAKTLDLTKPNLNIETSKPIFISEAEVIMNNLKELEIQDLCPLMKISEDLGVQTFTKIQDWNTIYYGDEKPFVLSFKGEAYRGLDADDFTKEDLEFCNDSLRILSGLYGALKPLDGTKAYRLEMGTKISIDGSKNLYDFWGNKIMEAVLKDLENHKEKVIINLASNEYYKSIKKIDKKVRVITPVFKERKGIEYKVVTVYAKKARGQMVRYITKNRITKSEDIKNFDLDGYEFNERLSEGDTWVFTRD.

Belongs to the UPF0246 family.

The chain is UPF0246 protein CPE2152 from Clostridium perfringens (strain 13 / Type A).